A 528-amino-acid polypeptide reads, in one-letter code: Peptide chain release factor 3 (528 aa).

One can recognise a tr-type G domain in the interval 10 to 278 (DRRRTFGIIS…AFVEQAPVPR (269 aa)). Residues 19–26 (SHPDAGKT), 87–91 (DTPGH), and 141–144 (NKLD) contribute to the GTP site.

Belongs to the TRAFAC class translation factor GTPase superfamily. Classic translation factor GTPase family. PrfC subfamily.

Its subcellular location is the cytoplasm. Functionally, increases the formation of ribosomal termination complexes and stimulates activities of RF-1 and RF-2. It binds guanine nucleotides and has strong preference for UGA stop codons. It may interact directly with the ribosome. The stimulation of RF-1 and RF-2 is significantly reduced by GTP and GDP, but not by GMP. The protein is Peptide chain release factor 3 of Syntrophotalea carbinolica (strain DSM 2380 / NBRC 103641 / GraBd1) (Pelobacter carbinolicus).